A 215-amino-acid polypeptide reads, in one-letter code: Redox-sensing transcriptional repressor Rex 2 (215 aa).

The segment at residues 15 to 54 (VYLRYLKMLGDSGVKRIKSREFSEMIQIPSATIRRDFSHV) is a DNA-binding region (H-T-H motif). 89–94 (GCGNLG) serves as a coordination point for NAD(+).

This sequence belongs to the transcriptional regulatory Rex family. As to quaternary structure, homodimer.

It localises to the cytoplasm. Its function is as follows. Modulates transcription in response to changes in cellular NADH/NAD(+) redox state. The sequence is that of Redox-sensing transcriptional repressor Rex 2 from Enterococcus faecalis (strain ATCC 700802 / V583).